The following is a 449-amino-acid chain: Interferon-related developmental regulator 1 (449 aa).

The span at 1–10 (MPKNKKRNAP) shows a compositional bias: basic residues. The segment at 1-42 (MPKNKKRNAPHRGGGGGGGSGAATSAATAGGPHRTVQPFSDE) is disordered. Residues 12-21 (RGGGGGGGSG) show a composition bias toward gly residues. A compositionally biased stretch (low complexity) spans 22 to 31 (AATSAATAGG).

The protein belongs to the IFRD family. In terms of assembly, interacts with PSIP1/LEDGF.

In terms of biological role, could play a role in regulating gene activity in the proliferative and/or differentiative pathways induced by NGF. May be an autocrine factor that attenuates or amplifies the initial ligand-induced signal. This Mus musculus (Mouse) protein is Interferon-related developmental regulator 1 (Ifrd1).